The chain runs to 290 residues: MKVIVLLLVLAVMQPVIQSQPFPGTEELPMTRRPPKGELEYWCTYAKSCDFCWNCRHGICKNKVFEKHPLIKKNDYIQICRVSRYNNRCSYFTDSRIRRFHIMSCTNPTYYDWFDELMQVKEDRVIDVENIKHTCLCMIATIALIGYVRKQYSRMRMQAATRLLIFLGLYVLLGILMTNIIMNLPLSTDNPMQMRRPPERDLKFWCTYAKHCDFCWTCKDGMCKNKVFSDHPIITQNDYIVNCTVSRWHDRCMYEAHFRIHYQHNMNCSQPKDLEWFIELKRHVINQDDL.

The signal sequence occupies residues 1-19 (MKVIVLLLVLAVMQPVIQS). Residues 1-160 (MKVIVLLLVL…QYSRMRMQAA (160 aa)) form an A repeat. The next 2 helical transmembrane spans lie at 128–148 (VENIKHTCLCMIATIALIGYV) and 163–183 (LLIFLGLYVLLGILMTNIIMN). The stretch at 161-290 (TRLLIFLGLY…KRHVINQDDL (130 aa)) is one B repeat.

This sequence belongs to the asfivirus MGF 110 family.

Its subcellular location is the membrane. This is Protein MGF 110-9L from Ornithodoros (relapsing fever ticks).